A 364-amino-acid polypeptide reads, in one-letter code: Aminomethyltransferase (364 aa).

The protein belongs to the GcvT family. As to quaternary structure, the glycine cleavage system is composed of four proteins: P, T, L and H.

It carries out the reaction N(6)-[(R)-S(8)-aminomethyldihydrolipoyl]-L-lysyl-[protein] + (6S)-5,6,7,8-tetrahydrofolate = N(6)-[(R)-dihydrolipoyl]-L-lysyl-[protein] + (6R)-5,10-methylene-5,6,7,8-tetrahydrofolate + NH4(+). Its function is as follows. The glycine cleavage system catalyzes the degradation of glycine. The chain is Aminomethyltransferase from Shewanella denitrificans (strain OS217 / ATCC BAA-1090 / DSM 15013).